Reading from the N-terminus, the 131-residue chain is Small ribosomal subunit protein uS8 (131 aa).

Belongs to the universal ribosomal protein uS8 family. In terms of assembly, part of the 30S ribosomal subunit. Contacts proteins S5 and S12.

Functionally, one of the primary rRNA binding proteins, it binds directly to 16S rRNA central domain where it helps coordinate assembly of the platform of the 30S subunit. In Alkalilimnicola ehrlichii (strain ATCC BAA-1101 / DSM 17681 / MLHE-1), this protein is Small ribosomal subunit protein uS8.